The sequence spans 565 residues: CTP synthase (565 aa).

The segment at 1 to 272 (MARPKNVKHI…DLRVMKKLGL (272 aa)) is amidoligase domain. Ser18 contacts CTP. UTP is bound at residue Ser18. 19–24 (SLGKGI) lines the ATP pocket. Tyr59 contacts L-glutamine. Position 76 (Asp76) interacts with ATP. Residues Asp76 and Glu146 each coordinate Mg(2+). CTP-binding positions include 153 to 155 (DIE), 193 to 198 (KTKPTQ), and Lys229. UTP is bound by residues 193–198 (KTKPTQ) and Lys229. Residues 299-543 (TIGVCGKYTE…VQAAKEFAMG (245 aa)) enclose the Glutamine amidotransferase type-1 domain. Gly363 contributes to the L-glutamine binding site. Cys390 serves as the catalytic Nucleophile; for glutamine hydrolysis. L-glutamine-binding positions include 391-394 (LGMQ), Glu414, and Arg471. Active-site residues include His516 and Glu518.

This sequence belongs to the CTP synthase family. Homotetramer.

It catalyses the reaction UTP + L-glutamine + ATP + H2O = CTP + L-glutamate + ADP + phosphate + 2 H(+). The enzyme catalyses L-glutamine + H2O = L-glutamate + NH4(+). The catalysed reaction is UTP + NH4(+) + ATP = CTP + ADP + phosphate + 2 H(+). It functions in the pathway pyrimidine metabolism; CTP biosynthesis via de novo pathway; CTP from UDP: step 2/2. Its activity is regulated as follows. Allosterically activated by GTP, when glutamine is the substrate; GTP has no effect on the reaction when ammonia is the substrate. The allosteric effector GTP functions by stabilizing the protein conformation that binds the tetrahedral intermediate(s) formed during glutamine hydrolysis. Inhibited by the product CTP, via allosteric rather than competitive inhibition. Functionally, catalyzes the ATP-dependent amination of UTP to CTP with either L-glutamine or ammonia as the source of nitrogen. Regulates intracellular CTP levels through interactions with the four ribonucleotide triphosphates. This chain is CTP synthase, found in Chlorobaculum parvum (strain DSM 263 / NCIMB 8327) (Chlorobium vibrioforme subsp. thiosulfatophilum).